We begin with the raw amino-acid sequence, 122 residues long: Large ribosomal subunit protein uL14 (122 aa).

It belongs to the universal ribosomal protein uL14 family. Part of the 50S ribosomal subunit. Forms a cluster with proteins L3 and L19. In the 70S ribosome, L14 and L19 interact and together make contacts with the 16S rRNA in bridges B5 and B8.

Its function is as follows. Binds to 23S rRNA. Forms part of two intersubunit bridges in the 70S ribosome. This chain is Large ribosomal subunit protein uL14, found in Paraburkholderia phytofirmans (strain DSM 17436 / LMG 22146 / PsJN) (Burkholderia phytofirmans).